Consider the following 574-residue polypeptide: uncharacterized protein (574 aa).

This is an uncharacterized protein from Homo sapiens (Human).